The sequence spans 313 residues: Methionyl-tRNA formyltransferase (313 aa).

110 to 113 contacts (6S)-5,6,7,8-tetrahydrofolate; that stretch reads SLLP.

Belongs to the Fmt family.

It carries out the reaction L-methionyl-tRNA(fMet) + (6R)-10-formyltetrahydrofolate = N-formyl-L-methionyl-tRNA(fMet) + (6S)-5,6,7,8-tetrahydrofolate + H(+). In terms of biological role, attaches a formyl group to the free amino group of methionyl-tRNA(fMet). The formyl group appears to play a dual role in the initiator identity of N-formylmethionyl-tRNA by promoting its recognition by IF2 and preventing the misappropriation of this tRNA by the elongation apparatus. In Enterococcus faecalis (strain ATCC 700802 / V583), this protein is Methionyl-tRNA formyltransferase.